We begin with the raw amino-acid sequence, 258 residues long: Triosephosphate isomerase (258 aa).

A substrate-binding site is contributed by 11–13 (NWK). Histidine 101 acts as the Electrophile in catalysis. Catalysis depends on glutamate 173, which acts as the Proton acceptor. Residues glycine 179, serine 219, and 240 to 241 (GG) each bind substrate.

It belongs to the triosephosphate isomerase family. In terms of assembly, homodimer.

The protein resides in the cytoplasm. It catalyses the reaction D-glyceraldehyde 3-phosphate = dihydroxyacetone phosphate. The protein operates within carbohydrate biosynthesis; gluconeogenesis. Its pathway is carbohydrate degradation; glycolysis; D-glyceraldehyde 3-phosphate from glycerone phosphate: step 1/1. Involved in the gluconeogenesis. Catalyzes stereospecifically the conversion of dihydroxyacetone phosphate (DHAP) to D-glyceraldehyde-3-phosphate (G3P). This is Triosephosphate isomerase from Streptomyces avermitilis (strain ATCC 31267 / DSM 46492 / JCM 5070 / NBRC 14893 / NCIMB 12804 / NRRL 8165 / MA-4680).